Reading from the N-terminus, the 331-residue chain is Adenosine deaminase (331 aa).

Zn(2+) contacts are provided by histidine 12 and histidine 14. Substrate-binding residues include histidine 14, aspartate 16, and glycine 170. Histidine 197 is a binding site for Zn(2+). The active-site Proton donor is the glutamate 200. Aspartate 278 contacts Zn(2+).

Belongs to the metallo-dependent hydrolases superfamily. Adenosine and AMP deaminases family. Adenosine deaminase subfamily. The cofactor is Zn(2+).

The enzyme catalyses adenosine + H2O + H(+) = inosine + NH4(+). The catalysed reaction is 2'-deoxyadenosine + H2O + H(+) = 2'-deoxyinosine + NH4(+). Functionally, catalyzes the hydrolytic deamination of adenosine and 2-deoxyadenosine. The chain is Adenosine deaminase from Vibrio vulnificus (strain CMCP6).